We begin with the raw amino-acid sequence, 2885 residues long: Chromodomain-helicase-DNA-binding protein 9 (2885 aa).

The tract at residues 173–195 is disordered; it reads QCSSLHSQQSRSNLNPGQNSLGQ. Residue K197 forms a Glycyl lysine isopeptide (Lys-Gly) (interchain with G-Cter in SUMO2) linkage. 3 disordered regions span residues 242 to 263, 283 to 347, and 479 to 677; these read CSSH…CSVS, SLLQ…QGNY, and CLQR…QPLQ. 2 stretches are compositionally biased toward polar residues: residues 243–263 and 283–310; these read SSHQ…CSVS and SLLQ…NSFS. Residues 323 to 334 are compositionally biased toward low complexity; sequence LLNPTPSLNSNN. Composition is skewed to polar residues over residues 335-347 and 483-505; these read FQIL…QGNY and QPPS…TQVR. Residue K498 is modified to N6-acetyllysine. Basic and acidic residues-rich tracts occupy residues 507–526 and 534–544; these read MSEK…EKAN and ARAKERGERNI. At S549 the chain carries Phosphoserine. Basic and acidic residues predominate over residues 572-592; sequence KPKDRDNKKPKTYSKLKEKTK. A Glycyl lysine isopeptide (Lys-Gly) (interchain with G-Cter in SUMO2) cross-link involves residue K595. S610 is modified (phosphoserine). A compositionally biased stretch (basic and acidic residues) spans 617 to 630; the sequence is AEQRSQHTFKEQHS. Positions 631-643 are enriched in basic residues; it reads QKRRSNRQIKRKK. The segment covering 644–659 has biased composition (basic and acidic residues); it reads YAEDAEGKQSEEEVKG. 2 Chromo domains span residues 689-760 and 772-838; these read AIVD…HFLA and VEVD…HLDR. Positions 867–871 match the LXXLL motif 1 motif; sequence LNWLL. Residues 871–1045 form the Helicase ATP-binding domain; that stretch reads LFNWYNRRNC…FSLLHFLEPL (175 aa). An ATP-binding site is contributed by 884–891; it reads DEMGLGKT. A DEAH box motif is present at residues 996–999; the sequence is DEAH. Residues 1035 to 1039 carry the LXXLL motif 2 motif; that stretch reads LFSLL. Positions 1185–1336 constitute a Helicase C-terminal domain; that stretch reads LIDKLLPKMK…KAVLQSMSGR (152 aa). Residues 1460–1484 are disordered; it reads KDELAELSEAESEGEEKPKLRRPCD. A compositionally biased stretch (acidic residues) spans 1464-1473; the sequence is AELSEAESEG. Phosphoserine is present on residues S1467 and S1471. Over residues 1474 to 1484 the composition is skewed to basic and acidic residues; sequence EEKPKLRRPCD. Residues K1587, K1737, and K1902 each participate in a glycyl lysine isopeptide (Lys-Gly) (interchain with G-Cter in SUMO2) cross-link. Phosphoserine is present on S2025. An LXXLL motif 3 motif is present at residues 2030 to 2034; sequence LPRLL. K2037 participates in a covalent cross-link: Glycyl lysine isopeptide (Lys-Gly) (interchain with G-Cter in SUMO2). The disordered stretch occupies residues 2046-2238; it reads VKSESLTEEP…TQDSFQANNG (193 aa). Phosphoserine occurs at positions 2057 and 2058. A Glycyl lysine isopeptide (Lys-Gly) (interchain with G-Cter in SUMO2) cross-link involves residue K2073. 2 positions are modified to phosphoserine: S2074 and S2078. Residues 2083–2092 show a composition bias toward polar residues; the sequence is VLSQATGDQK. Residues 2093–2103 show a composition bias toward basic and acidic residues; that stretch reads SGGKSETDRRM. The segment covering 2127-2193 has biased composition (low complexity); sequence SQSSSDSDSD…SSSSSSSSSS (67 aa). The segment covering 2201-2215 has biased composition (basic and acidic residues); it reads DVQKREGTPHRKAYD. Residues 2220–2238 are compositionally biased toward polar residues; the sequence is ASLSTTQDETQDSFQANNG. A binds A/T-rich DNA region spans residues 2331–2471; the sequence is QMSKVKKHVR…LSYPQPQRIP (141 aa). Glycyl lysine isopeptide (Lys-Gly) (interchain with G-Cter in SUMO2) cross-links involve residues K2349, K2355, and K2360. Residues 2428 to 2435 are a.T hook-like; the sequence is KKRRGRRR. The disordered stretch occupies residues 2473-2494; that stretch reads TESPVPVINLKDGTRLAGDDAP. Residues 2484 to 2494 show a composition bias toward basic and acidic residues; it reads DGTRLAGDDAP. An LXXLL motif 4 motif is present at residues 2710–2714; that stretch reads LPNLL. Positions 2724-2770 are disordered; sequence AESGAEEKRGNDSKELEGKKERTESQSPENGGERCVPGSPSTSSTAA. Basic and acidic residues predominate over residues 2728–2747; that stretch reads AEEKRGNDSKELEGKKERTE. The LXXLL motif 5 motif lies at 2782–2786; the sequence is LNPLL. The span at 2818–2847 shows a compositional bias: basic and acidic residues; it reads KNKSDDLDSSKSVEIKEENSRVRDQEEKGG. The segment at 2818–2885 is disordered; sequence KNKSDDLDSS…SEDSDSSNED (68 aa). Residue K2833 forms a Glycyl lysine isopeptide (Lys-Gly) (interchain with G-Cter in SUMO2) linkage. Low complexity predominate over residues 2864–2876; sequence RASSGSDSSSSSS.

This sequence belongs to the SNF2/RAD54 helicase family. As to quaternary structure, interacts with PPARA. Probably interacts with ESR1 and NR1I3. Post-translationally, phosphorylated on serine and tyrosine residues. Expressed in osteoprogenitor cells during development and in mature bone (at protein level).

It localises to the cytoplasm. It is found in the nucleus. It catalyses the reaction ATP + H2O = ADP + phosphate + H(+). In terms of biological role, probable ATP-dependent chromatin-remodeling factor. Acts as a transcriptional coactivator for PPARA and possibly other nuclear receptors. Has DNA-dependent ATPase activity and binds to A/T-rich DNA. Associates with A/T-rich regulatory regions in promoters of genes that participate in the differentiation of progenitors during osteogenesis. This is Chromodomain-helicase-DNA-binding protein 9 (Chd9) from Mus musculus (Mouse).